A 487-amino-acid polypeptide reads, in one-letter code: MLRVIKEALTFDDVLLVPAHSTVLPNTADLSTQLTKTIRLNIPMLSAAMDTVTETKLAISLAQEGGIGFIHKNMSIERQAERVRKVKKFESGIVSDPVTVSPTLSLAELSELVKKNGFASFPVVDDEKNLVGIITGRDTRFVTDLNKTVADFMTPKARLVTVKRNASRDEIFGLMHTHRVEKVLVVSDDFKLKGMITLKDYQKSEQKPQACKDEFGRLRVGAAVGAGPGNEERIDALVKAGVDVLLIDSSHGHSEGVLQRVRETRAKYPDLPIVAGNVATAEGAIALADAGASAVKVGIGPGSICTTRIVTGVGVPQITAIADAAEALKDRGIPVIADGGIRFSGDISKAIAAGASCVMVGSMFAGTEEAPGEIELYQGRAFKSYRGMGSLGAMSKGSSDRYFQSDNAADKLVPEGIEGRIPYKGFLKEIIHQQMGGLRSCMGLTGCATIDELRTKAQFVRISGAGIQESHVHDVTITKEAPNYRMG.

CBS domains are found at residues 93 to 149 (IVSD…NKTV) and 153 to 214 (MTPK…CKDE). Residues D248, 248–250 (DSS), and 298–300 (GIG) each bind NAD(+). Residues G300 and G302 each coordinate K(+). Position 303 (S303) interacts with IMP. C305 contacts K(+). C305 functions as the Thioimidate intermediate in the catalytic mechanism. Residues 338–340 (DGG), 361–362 (GS), and 385–389 (YRGMG) contribute to the IMP site. R401 acts as the Proton acceptor in catalysis. Position 415 (E415) interacts with IMP. Residues E469, S470, and H471 each contribute to the K(+) site.

Belongs to the IMPDH/GMPR family. As to quaternary structure, homotetramer. It depends on K(+) as a cofactor.

It catalyses the reaction IMP + NAD(+) + H2O = XMP + NADH + H(+). It participates in purine metabolism; XMP biosynthesis via de novo pathway; XMP from IMP: step 1/1. Its activity is regulated as follows. Mycophenolic acid (MPA) is a non-competitive inhibitor that prevents formation of the closed enzyme conformation by binding to the same site as the amobile flap. In contrast, mizoribine monophosphate (MZP) is a competitive inhibitor that induces the closed conformation. MPA is a potent inhibitor of mammalian IMPDHs but a poor inhibitor of the bacterial enzymes. MZP is a more potent inhibitor of bacterial IMPDH. Its function is as follows. Catalyzes the conversion of inosine 5'-phosphate (IMP) to xanthosine 5'-phosphate (XMP), the first committed and rate-limiting step in the de novo synthesis of guanine nucleotides, and therefore plays an important role in the regulation of cell growth. The polypeptide is Inosine-5'-monophosphate dehydrogenase (Pasteurella multocida (strain Pm70)).